Consider the following 212-residue polypeptide: Ras-related protein Rab-17 (212 aa).

Serine 29 carries the post-translational modification Phosphoserine. Residues glycine 31, lysine 32, serine 33, and threonine 50 each contribute to the GTP site. Residues serine 33, threonine 50, and aspartate 73 each coordinate Mg(2+). Residues 43 to 54 (DFKSILPTVGCA) carry the Switch 1 motif. The short motif at 75-91 (AGQEKYHSVCHLYFRGA) is the Switch 2 element. Glycine 76, asparagine 132, lysine 133, aspartate 135, and alanine 163 together coordinate GTP. Residues cysteine 209 and cysteine 210 are each lipidated (S-geranylgeranyl cysteine).

The protein belongs to the small GTPase superfamily. Rab family. Mg(2+) serves as cofactor. Expressed in melanocytes (at protein level).

Its subcellular location is the recycling endosome membrane. The protein resides in the melanosome. It is found in the cell projection. It localises to the dendrite. It catalyses the reaction GTP + H2O = GDP + phosphate + H(+). Its activity is regulated as follows. Regulated by guanine nucleotide exchange factors (GEFs) which promote the exchange of bound GDP for free GTP. Regulated by GTPase activating proteins (GAPs) which increase the GTP hydrolysis activity. Inhibited by GDP dissociation inhibitors (GDIs). The small GTPases Rab are key regulators of intracellular membrane trafficking, from the formation of transport vesicles to their fusion with membranes. Rabs cycle between an inactive GDP-bound form and an active GTP-bound form that is able to recruit to membranes different set of downstream effectors directly responsible for vesicle formation, movement, tethering and fusion. RAB17 is involved in transcytosis, the directed movement of endocytosed material through the cell and its exocytosis from the plasma membrane at the opposite side. Mainly observed in epithelial cells, transcytosis mediates for instance, the transcellular transport of immunoglobulins from the basolateral surface to the apical surface. Most probably controls membrane trafficking through apical recycling endosomes in a post-endocytic step of transcytosis. Required for melanosome transport and release from melanocytes, it also regulates dendrite and dendritic spine development. May also play a role in cell migration. This chain is Ras-related protein Rab-17, found in Homo sapiens (Human).